Consider the following 1679-residue polypeptide: MKEATELNEDMLEEAEHLALLEPEDDGTFFQVTNLLNIMDSESAKTDTTGPGLDMRKTLASVIITEKATTDPCVVMNALIRCLQMPEISTQRKMNIYNIMQEIIQQEGEMEEHCIQRLVAIASKQMRDITEAEDFETAEVASETLVALSRNHFSLVMYELQHHLKPLNLTDEFVIVTLAKLANGNVFEFMPYMGITLATIFTMLRLANEAKMRQVICSAMETFCETVQFYLRHLEDSLYPVMTEDQFAVKLFPMYRYFVTVWLRHQDLEVKLGVIKSLRPMLSLLLPNDDLREQVYDYIPLLLAEFQGTGHWPLFPSLLQVLRQILEASVTTNTPIPPMLLHPIFTELHVQVCSKAPAQQQFSSQNLMEIVHCFIALARSYPKELMKFFFSQVEMSKEAVRVGTLALIRAVVSADDPKINIKTIYLAIRVVKNTLSDTRSKVRMAILRIIGQLVLSGFQEKIKGWGLKYVSVQLTLSTYKLTNRRECFYQRDLEEKMVHKVTMDTVKIITSSISGMTNEFWVRLLCYIMETDYTEALTPICISLTNLAENQIHGKDTEAGIAGKSKHVDLPAPQKLLARLLVLMSSPYKGEGRGIAMLNLLRTLSQSIAPSMADMWEQEIPLLVQYLEEHTEFTWNQKTWEDMLIQFLRNSLKKTRGTSWSLRLSKELNNQIETFDSPSLEKGFLYRALGFTLGMGLEADRVEVLLLELLYKTDYSNDFDREGVILCFGLCARGQVKTVLNVLQDFEERIQESEQSWQIGAWRKDHPWRRETVKSALMVMYSCVSSYCHPQMLLTHVDSPITSKIIHHYSSSCQDISLKMAFMKSVVQVTNAIKSIQDPEDFQFAHKSALTGLIVVIIKAEPPDHLVSPVRSMAMDALSQLSTMKPFYSPEESTELMDISIHTVISLQPPGEDNESVKTLYANTMSSLKQLMEGLLQRQLDPKGLQDTVHLLEKWILSEKEWEREKAMALHLHLMQIYVQSIGVCIPLKLGQFGVLVGLIAPCTCDAHRRTRLASINVLSSLLDLHVSQTCSLWGTSKEQELQKCKEDLQDTDMNKISSASSRVAKVVCPEFNCDEVVSLIQKLCENIGAMDLQHDRAAVTWIGIFLQMRVKELEDKVAEILGAILVHLPVVDHPEVRRHLIEGILLLAHYHQETVLTSLLRQPLPMESHLTEVWLAVAENVPFARTMLHGLLGRLQSRFTAKINATSKADIWRLAAVDPLMTLCTIQLLMEKMDQDDKFPDLFPDLLYTFLLQLGSSHGPEAASPVLKTWRLVHTGPLPQEMTLQRCSRSRITIKSMQLLVKRINREPLEQALEEQSVWSLLENGGTFLEGVSLMARLCMQNMENYMQRLAELVLTGMGSEILSCCISSTAICVEFMSDPVLHQEKLLRPVVLMLEKGAGQDKDETLQVLSLRALGNMALGAPRKVKQYRKLLLEKCLGSLQGQVSSSAMAEGMEALTKVLAELREGDIGSSFEAISKQCRAFFDNESELLRLKAFVLFGKLTKVVGISKKHFFKGEVKRGWVSLLLHCQDPCPSVAQACVATMFQCVHFWGWKSLESSFGHSNDSINEQMTVFQTNMCSVLAQKKPAVLCGFLLETTVFMKNNLSRIRIAACNLAGIIMKQLSAHYLKKMDLVGLRNSLQDLQLDSDAGVRRAALETLKVLDSCNQHWLLASPRGLP.

HEAT repeat units lie at residues 68-91 (ATTD…ISTQ), 92-128 (RKMN…QMRD), 190-229 (MPYM…TVQF), 293-313 (EQVY…GHWP), 314-350 (LFPS…ELHV), 380-417 (SYPK…ADDP), 422-459 (KTIY…SGFQ), 571-610 (PAPQ…SIAP), 614-654 (DMWE…SLKK), 737-774 (KTVL…ETVK), 848-887 (SALT…MKPF), 991-1028 (GQFG…LHVS), 1219-1261 (DPLM…SHGP), 1387-1425 (KLLR…GAPR), and 1632-1669 (MDLV…CNQH).

This is Maestro heat-like repeat-containing protein family member 2A (Mroh2a) from Mus musculus (Mouse).